The primary structure comprises 1789 residues: MVNAVMDAIALLSSLASDLDIMLNDLRSAPSHAATATATATTTATVATATATTTANRQQQHHNHHNQQQMQSRQLHAHHWQSINNNKNNNISNKNNNNNNNNNNNINNNNNNNNHSAHPPCLIDIKLKSSRSAATKITHTTTANQLQQQQRRRVAPKPLPRPPRRTRPTGQKEVGPSEEDGDTDASDLANMTSPLSASAAATRINGLSPEVKKVQRLPLWNARNGNGSTTTHCHPTGVSVQRRLPIQSHQQRILNQRFHHQRMHHGTSEPIPSGVATPSSLDSASVDGGKSHTGNNNNINNNHNGQQSQKSQQQAGLAAKLNVLAQSNLNNNNTTNQPGSMTPASNRTGLDSNQNQKQNLNADSRRSSSVDPDADADDVVDAAHGGAFEDDMQALLPKCSRRSRDELSQSRTSLVSSSEGGILAEGETSSEDDEEEPVEAEDEGEESSRDSSDNSPPCDLGLMERLLVTHPMWFLPGIQRSGAVHLLQGKEEGTFIVRGSSQPNTMAVSVRLPQDTGPYIEHYLIQSHDNVLSLESSRFTFGSIPSLIAHYAQCCDELPVQLMLPRVLREANNRKKLSSLALLGQEFWSYVSSPALLGPLTPSVAPSKDQQLLDAKSPLSLTETSGLGTATFFSDTVSKPPPTGAPPLPGGGLFSPTGSGQLLGFFSQAGTPSDTTNSSLSSFTTSGGQHMQLLSPNSVDSVILTMSPVDNPGHYLPGSTGAPMAPLCPSVVDQQLSTFKVAQTAPEVDQVRPQRPKPPNTLNLKPPAPPLRWSKPHSPDQNGSANGNFTVTTTVTFSMENGGGGGSGPTVGNGNGKFVEVTTPAASNPFNALLNGQASTFQTFAKRLSPEGECKDTLSSQGSSSNDSRWPPPARKLLTSPMTPLTPSGGSSSSGGKSRKSRAGKESQHYKESDILESPPMQYCASALSDKISDYEDVWSHDPSDRASLLTSFRPALDTVGGVMNRRPDLLAETPSTPTPTQQSHLTPCEEETTATPNESSSQSLLQFSGDVPARSRAGLLLPNLSGQVPPVAMTKSMTAAEDDGGDTTPTAEGQANGASRSKQGSPFYAEPADALRQAGLTSAATAILRRQHRSQMLHASQRHSEPLKAGFGGSGNGAMLQPSDLEKLAGSLDELKPKPKVSQQQQQSQQQQQPTKRARNRIDHWQLDSSWEFMAKQDTGSHAGGDYDTAAIDWQEKENSLGRDSRADGQGKKRTLTIHQIIANRLPDLNLPELVRCSTPPQTAALQPHVLGQDKAGVGCDGSQKSFQSQIGCRLSSYDNVFCQNSFGGIDSAQSDDGTIFSEPWDSSQWDTFLPHDDATINSDTIHLSKCRPALSEDDTIVEELQSTKDGSNGSCNQDTLKANRNGAGHHKLNNGNGNGKANNRPKVATILRNPSMRDREVLCHPRNKMSIQSSGPGDSLRAYTLQLAQDPSSTFARNIENFICCTKESREAAPQVVMRNMRQFMSGMKNYLVKHGEGKFHAELETARARLKSDEFLNLDAMLETVMHQLVVLPLREHLYGIFVDHYQRSEDIQLLAQNVRYACEREAADFGIRPTVTPPSQAALRLIANLLWRLQEAELPLDKLELFLCVISTVFDATGCPRGQQLGADDFLPVLVYVVAKCGFVGAEIEAEFMWGLLQPTLLNGEPGYYLTALCSAVQVLKTFMASEGESGSGSLDWRSSCLPACSSVLRVIIPDECNGSLQTRTLPVRPHTTTREVCRIIAHKARITNPQDYALFKLVDGEETLLTDAECPQDARLAAKGKHCMLAYKRIDAKIAWPTAQLAGH.

Disordered regions lie at residues 53-120 (TTAN…AHPP), 140-190 (TTTA…DLAN), 218-237 (PLWN…HPTG), 261-317 (QRMH…QAGL), 329-378 (LNNN…DADD), and 401-460 (RRSR…PCDL). Over residues 82–114 (SINNNKNNNISNKNNNNNNNNNNNINNNNNNNN) the composition is skewed to low complexity. A compositionally biased stretch (polar residues) spans 140–149 (TTTANQLQQQ). Residues 176 to 185 (PSEEDGDTDA) are compositionally biased toward acidic residues. Over residues 223-233 (RNGNGSTTTHC) the composition is skewed to polar residues. Residues 295-317 (NNNNINNNHNGQQSQKSQQQAGL) show a composition bias toward low complexity. Over residues 337 to 361 (QPGSMTPASNRTGLDSNQNQKQNLN) the composition is skewed to polar residues. Positions 409–418 (QSRTSLVSSS) are enriched in low complexity. Residues 428-445 (TSSEDDEEEPVEAEDEGE) are compositionally biased toward acidic residues. The 94-residue stretch at 473–566 (WFLPGIQRSG…ELPVQLMLPR (94 aa)) folds into the SH2 domain. Disordered regions lie at residues 632–689 (FFSD…SGGQ), 744–787 (TAPE…SANG), 852–918 (GECK…ILES), 969–1006 (DLLA…QSLL), 1040–1067 (AAED…QGSP), 1094–1123 (RSQM…MLQP), and 1138–1160 (PKPK…KRAR). Residues 639-649 (KPPPTGAPPLP) show a composition bias toward pro residues. Low complexity predominate over residues 671-686 (TPSDTTNSSLSSFTTS). Residues 857 to 868 (TLSSQGSSSNDS) are compositionally biased toward polar residues. Residues 903 to 914 (AGKESQHYKESD) are compositionally biased toward basic and acidic residues. Over residues 974–984 (TPSTPTPTQQS) the composition is skewed to low complexity. 2 stretches are compositionally biased toward polar residues: residues 994–1006 (TATP…QSLL) and 1048–1065 (TTPT…SKQG). The span at 1143 to 1154 (SQQQQQSQQQQQ) shows a compositional bias: low complexity. Residues 1531–1673 (RSEDIQLLAQ…LKTFMASEGE (143 aa)) enclose the VPS9 domain. The 89-residue stretch at 1689–1777 (CSSVLRVIIP…CMLAYKRIDA (89 aa)) folds into the Ras-associating domain.

This sequence belongs to the RIN (Ras interaction/interference) family. In late cellular blastoderm embryos, it is expressed in the posterior end. Then, as development proceeds, it is expressed in the developing midgut, amnioserosa and in a specific subset of CNS neurons. Isoform 1 is expressed earlier in developing midgut and amnioserosa, but is not expressed in the CNS.

Its function is as follows. Potential Ras effector protein. May function as a guanine nucleotide exchange (GEF), by exchanging bound GDP for free GTP. The chain is Protein sprint (spri) from Drosophila melanogaster (Fruit fly).